Here is a 225-residue protein sequence, read N- to C-terminus: Small ribosomal subunit protein uS5 (225 aa).

The S5 DRBM domain maps to 57–120 (LEEQVLDVKL…AQAKLSLIKV (64 aa)).

This sequence belongs to the universal ribosomal protein uS5 family. As to quaternary structure, part of the 30S ribosomal subunit. Contacts protein S4.

With S4 and S12 plays an important role in translational accuracy. The chain is Small ribosomal subunit protein uS5 from Methanococcus vannielii (strain ATCC 35089 / DSM 1224 / JCM 13029 / OCM 148 / SB).